The chain runs to 461 residues: Putative forkhead-related transcription factor fkh-5 (461 aa).

The fork-head DNA-binding region spans 171-262; the sequence is QRPQLSYQLL…VEKEMIDVKT (92 aa).

The protein localises to the nucleus. Functionally, transcription factor. Binds to DNA sequence motif 5'-CTGTTTCA-3'. Regulates expression of a class of small RNAs, known as 21U-RNAs, perhaps acting redundantly with fkh-4 and fkh-3. The chain is Putative forkhead-related transcription factor fkh-5 (fkh-5) from Caenorhabditis elegans.